A 95-amino-acid polypeptide reads, in one-letter code: Aspartyl/glutamyl-tRNA(Asn/Gln) amidotransferase subunit C (95 aa).

It belongs to the GatC family. Heterotrimer of A, B and C subunits.

It carries out the reaction L-glutamyl-tRNA(Gln) + L-glutamine + ATP + H2O = L-glutaminyl-tRNA(Gln) + L-glutamate + ADP + phosphate + H(+). The catalysed reaction is L-aspartyl-tRNA(Asn) + L-glutamine + ATP + H2O = L-asparaginyl-tRNA(Asn) + L-glutamate + ADP + phosphate + 2 H(+). Its function is as follows. Allows the formation of correctly charged Asn-tRNA(Asn) or Gln-tRNA(Gln) through the transamidation of misacylated Asp-tRNA(Asn) or Glu-tRNA(Gln) in organisms which lack either or both of asparaginyl-tRNA or glutaminyl-tRNA synthetases. The reaction takes place in the presence of glutamine and ATP through an activated phospho-Asp-tRNA(Asn) or phospho-Glu-tRNA(Gln). In Clostridium botulinum (strain Loch Maree / Type A3), this protein is Aspartyl/glutamyl-tRNA(Asn/Gln) amidotransferase subunit C.